A 247-amino-acid chain; its full sequence is 5-oxoprolinase subunit A 1 (247 aa).

This sequence belongs to the LamB/PxpA family. As to quaternary structure, forms a complex composed of PxpA, PxpB and PxpC.

It catalyses the reaction 5-oxo-L-proline + ATP + 2 H2O = L-glutamate + ADP + phosphate + H(+). Catalyzes the cleavage of 5-oxoproline to form L-glutamate coupled to the hydrolysis of ATP to ADP and inorganic phosphate. The chain is 5-oxoprolinase subunit A 1 from Ralstonia nicotianae (strain ATCC BAA-1114 / GMI1000) (Ralstonia solanacearum).